The sequence spans 314 residues: ATP synthase gamma chain (314 aa).

It belongs to the ATPase gamma chain family. F-type ATPases have 2 components, CF(1) - the catalytic core - and CF(0) - the membrane proton channel. CF(1) has five subunits: alpha(3), beta(3), gamma(1), delta(1), epsilon(1). CF(0) has three main subunits: a, b and c.

The protein resides in the cellular thylakoid membrane. Produces ATP from ADP in the presence of a proton gradient across the membrane. The gamma chain is believed to be important in regulating ATPase activity and the flow of protons through the CF(0) complex. The polypeptide is ATP synthase gamma chain (Synechococcus sp. (strain JA-2-3B'a(2-13)) (Cyanobacteria bacterium Yellowstone B-Prime)).